The sequence spans 484 residues: Glucan endo-1,3-beta-glucosidase 5 (484 aa).

An N-terminal signal peptide occupies residues 1–26 (MLFKGVFAVFFVITLLYASLLIEVEG). The N-linked (GlcNAc...) asparagine glycan is linked to Asn102. Glu122 functions as the Proton donor in the catalytic mechanism. Asn129 and Asn260 each carry an N-linked (GlcNAc...) asparagine glycan. The active-site Nucleophile is Glu267. A disulfide bridge connects residues Cys366 and Cys428. An N-linked (GlcNAc...) asparagine glycan is attached at Asn409. A lipid anchor (GPI-anchor amidated alanine) is attached at Ala460. The propeptide at 461–484 (SAMMPITRSTAVLLLLSICLYIVL) is removed in mature form.

Belongs to the glycosyl hydrolase 17 family. Contains two additional disulfide bonds.

It is found in the cell membrane. The catalysed reaction is Hydrolysis of (1-&gt;3)-beta-D-glucosidic linkages in (1-&gt;3)-beta-D-glucans.. In Arabidopsis thaliana (Mouse-ear cress), this protein is Glucan endo-1,3-beta-glucosidase 5.